The chain runs to 2283 residues: AT-rich interactive domain-containing protein 1A (2283 aa).

The span at 1–10 shows a compositional bias: low complexity; that stretch reads MAAQVAPAAA. 3 disordered regions span residues 1–333, 346–822, and 979–1006; these read MAAQ…PADM, AAAA…LPNA, and ATKM…TTTN. Position 2 is an N-acetylalanine (A2). Residues 22 to 34 are compositionally biased toward basic and acidic residues; it reads ELKKAEQQQREEA. S56 and S77 each carry phosphoserine. The span at 77-93 shows a compositional bias: gly residues; sequence SNGGGGGGGAGSGGGPG. Low complexity-rich tracts occupy residues 128–143 and 233–266; these read SSSD…AAAA and SSPR…SSSS. S234 is subject to Phosphoserine. Over residues 274–287 the composition is skewed to gly residues; that stretch reads AMGGGGPSAAGGGT. Residue T287 is modified to Phosphothreonine. The short motif at 296 to 300 is the LXXLL element; sequence LNQLL. The span at 296 to 307 shows a compositional bias: polar residues; that stretch reads LNQLLTSPSSAR. S302 carries the phosphoserine modification. Gly residues predominate over residues 311 to 328; that stretch reads GYPGGDYGGGPQDGGAGK. Phosphoserine occurs at positions 365 and 384. Low complexity predominate over residues 402–427; that stretch reads PYSQQQGPPSGPQQGHGYPGQPYGSQ. R431 bears the Asymmetric dimethylarginine mark. Composition is skewed to polar residues over residues 438 to 451 and 459 to 470; these read GRAQ…SYAQ and QGPSAYGQQGQT. 2 stretches are compositionally biased toward low complexity: residues 471-547 and 554-596; these read PYYN…QHPQ and QPQA…YSQQ. The residue at position 605 (S605) is a Phosphoserine. Residues 611–622 are compositionally biased toward low complexity; that stretch reads SQASSAPSMTSS. A compositionally biased stretch (polar residues) spans 629 to 638; it reads MNLSLQSRPS. Over residues 659–675 the composition is skewed to low complexity; it reads SPGVSTSGISSSQGEQS. Positions 676–686 are enriched in polar residues; it reads NPAQSPFSPHT. S697, S699, S703, S731, S765, and S773 each carry phosphoserine. Composition is skewed to polar residues over residues 731-748 and 756-794; these read SGQS…SSIA and RNPQ…QNSM. The span at 795 to 822 shows a compositional bias: low complexity; that stretch reads GSYGPQGSQYGPQGGYPRQPNYNALPNA. The region spanning 1018 to 1109 is the ARID domain; that stretch reads EPERKMWVDR…CLYAFECKIE (92 aa). 2 disordered regions span residues 1114 to 1484 and 1539 to 1636; these read PPPD…MMGG and RANH…PPMI. Low complexity predominate over residues 1142 to 1155; it reads MQGPQTPQSTSSSM. A compositionally biased stretch (pro residues) spans 1163–1178; the sequence is PPTPASTPHSQIPPLP. The residue at position 1185 (S1185) is a Phosphoserine. Residues 1198-1220 are compositionally biased toward polar residues; sequence PTFQKRNSMTPNPGYQPSMNTSD. S1236 bears the Phosphoserine mark. R1277 carries the post-translational modification Omega-N-methylarginine. The span at 1343–1368 shows a compositional bias: low complexity; the sequence is QFSTQGTPSSSPFPSQQTTMYQQQQQ. A Nuclear localization signal motif is present at residues 1369–1388; sequence NYKRPMDGTYGPPAKRHEGE. The segment covering 1395–1426 has biased composition (low complexity); it reads SAGQGQPQQQQLPAAQSQPASQPQAAQPSPQQ. Polar residues-rich tracts occupy residues 1427 to 1436 and 1469 to 1478; these read DVYNQYSNAY and PGSSAQQNMP. Pro residues predominate over residues 1555 to 1579; sequence PYGPSAPVPPMTRPPPSNYQPPPSM. S1605 bears the Phosphoserine mark. K1613 is subject to N6-acetyllysine. The LXXLL signature appears at 1710–1714; it reads LPGLL. 3 disordered regions span residues 1757 to 1782, 1872 to 1904, and 1917 to 1941; these read PAHT…GVGN, CPTP…PEKR, and SSTL…PFGI. Over residues 1761 to 1782 the composition is skewed to acidic residues; sequence EEEEEEHLDPKLEEEEEEGVGN. 2 positions are modified to phosphothreonine: T1874 and T1886. The span at 1882-1893 shows a compositional bias: low complexity; sequence TVEGTPGTTEQE. At K1903 the chain carries N6-acetyllysine. The segment covering 1923 to 1935 has biased composition (basic and acidic residues); that stretch reads EGAKSAEATKESS. Phosphoserine is present on residues S1927 and S1942. Short sequence motifs (LXXLL) lie at residues 1965–1969 and 2083–2087; these read LCTLL and LDGLL.

As to quaternary structure, component of SWI/SNF chromatin remodeling complexes, in some of which it can be mutually exclusive with ARID1B/BAF250B. The canonical complex contains a catalytic subunit (either SMARCA4/BRG1/BAF190A or SMARCA2/BRM/BAF190B) and at least SMARCE1, ACTL6A/BAF53, SMARCC1/BAF155, SMARCC2/BAF170, and SMARCB1/SNF5/BAF47. Other subunits specific to each of the complexes may also be present permitting several possible combinations developmentally and tissue specific. Component of the BAF (SWI/SNF-A) complex, which includes at least actin (ACTB), ARID1A/BAF250A, ARID1B/BAF250B, SMARCA2/BRM, SMARCA4/BRG1/BAF190A, ACTL6A/BAF53, ACTL6B/BAF53B, SMARCE1/BAF57, SMARCC1/BAF155, SMARCC2/BAF170, SMARCB1/SNF5/INI1, and one or more SMARCD1/BAF60A, SMARCD2/BAF60B, or SMARCD3/BAF60C. In muscle cells, the BAF complex also contains DPF3. Component of neural progenitors-specific chromatin remodeling complex (npBAF complex) composed of at least, ARID1A/BAF250A or ARID1B/BAF250B, SMARCD1/BAF60A, SMARCD3/BAF60C, SMARCA2/BRM/BAF190B, SMARCA4/BRG1/BAF190A, SMARCB1/BAF47, SMARCC1/BAF155, SMARCE1/BAF57, SMARCC2/BAF170, PHF10/BAF45A, ACTL6A/BAF53A and actin. Component of neuron-specific chromatin remodeling complex (nBAF complex) composed of at least, ARID1A/BAF250A or ARID1B/BAF250B, SMARCD1/BAF60A, SMARCD3/BAF60C, SMARCA2/BRM/BAF190B, SMARCA4/BRG1/BAF190A, SMARCB1/BAF47, SMARCC1/BAF155, SMARCE1/BAF57, SMARCC2/BAF170, DPF1/BAF45B, DPF3/BAF45C, ACTL6B/BAF53B and actin. Component of a SWI/SNF-like EBAFa complex, at least composed of SMARCA4/BRG1/BAF190A, SMARCB1/BAF47/SNF5, ACTL6A/BAF53A, SMARCE1/BAF57, SMARCD1/BAF60A, SMARCC1/BAF155, SMARCC2/BAF170, BAF250A and MLLT1/ENL. Interacts through its C-terminus with SMARCA2/BRM/BAF190B and SMARCA4/BRG1/BAF190A. Interacts with SMARCC1/BAF155. Interacts with FOS (via bZIP domain and leucine-zipper region), FOSB isoform 1 and 2, FOSL1 and FOSL2. As to expression, widely expressed. Expressed at high levels in the testis.

The protein resides in the nucleus. Functionally, involved in transcriptional activation and repression of select genes by chromatin remodeling (alteration of DNA-nucleosome topology). Component of SWI/SNF chromatin remodeling complexes that carry out key enzymatic activities, changing chromatin structure by altering DNA-histone contacts within a nucleosome in an ATP-dependent manner. Binds DNA non-specifically. Belongs to the neural progenitors-specific chromatin remodeling complex (npBAF complex) and the neuron-specific chromatin remodeling complex (nBAF complex). During neural development a switch from a stem/progenitor to a postmitotic chromatin remodeling mechanism occurs as neurons exit the cell cycle and become committed to their adult state. The transition from proliferating neural stem/progenitor cells to postmitotic neurons requires a switch in subunit composition of the npBAF and nBAF complexes. As neural progenitors exit mitosis and differentiate into neurons, npBAF complexes which contain ACTL6A/BAF53A and PHF10/BAF45A, are exchanged for homologous alternative ACTL6B/BAF53B and DPF1/BAF45B or DPF3/BAF45C subunits in neuron-specific complexes (nBAF). The npBAF complex is essential for the self-renewal/proliferative capacity of the multipotent neural stem cells. The nBAF complex along with CREST plays a role regulating the activity of genes essential for dendrite growth. The chain is AT-rich interactive domain-containing protein 1A (Arid1a) from Mus musculus (Mouse).